We begin with the raw amino-acid sequence, 327 residues long: Pyruvate dehydrogenase E1 component subunit beta (327 aa).

A thiamine diphosphate-binding site is contributed by Glu60. K(+) contacts are provided by Val113, Ala161, Ile162, and Glu164.

Heterodimer of an alpha and a beta chain. Requires thiamine diphosphate as cofactor.

It is found in the plastid. It localises to the chloroplast. The enzyme catalyses N(6)-[(R)-lipoyl]-L-lysyl-[protein] + pyruvate + H(+) = N(6)-[(R)-S(8)-acetyldihydrolipoyl]-L-lysyl-[protein] + CO2. Functionally, the pyruvate dehydrogenase complex catalyzes the overall conversion of pyruvate to acetyl-CoA and CO(2). It contains multiple copies of three enzymatic components: pyruvate dehydrogenase (E1), dihydrolipoamide acetyltransferase (E2) and lipoamide dehydrogenase (E3). The sequence is that of Pyruvate dehydrogenase E1 component subunit beta (pdhB) from Cyanidium caldarium (Red alga).